Reading from the N-terminus, the 545-residue chain is MAQLAGQPVVILPEGTQRYVGRDAQRLNILAARIIAETVRTTLGPKGMDKMLVDSLGDIVITNDGATILDEMDIQHPAAKMMVEVAKTQDKEAGDGTTTAVVIAGELLRKAEELLDQNIHPSIIIKGYALAAEKAQEILDSIARDVDVEDREILKKAAMTAITGKAAEEEREYLAEIAVEAVKQVAEKVGDRYHVDLDNIKFEKKEGGSVKDTQLIKGVVIDKEVVHPGMRKRVEGAKIALINEALEVKETETDAEIRITSPEQLQAFLEQEEKMLREMVDKIKEVGANVVFVQKGIDDLAQHYLAKYGIMAVRRVKKSDMEKLAKATGAKIVTNVRDLTPEDLGEAELVEQRKVAGENMIFVEGCKNPKAVTILIRGGTEHVVDEVERALEDAVKVVKDIVEDGKIVAAGGAPEIELAISVDEYAKEVGGKEQLAIEAFAEALKVIPRTLAGNAGLDPIETLVKVIAAHKEKGPTIGVDVFEGEPADMLERGVIAPVRVPKQAIKSAKAAIMILRIDDVIAASKLEKDKEGGKGGTRDFGSDLD.

The protein belongs to the TCP-1 chaperonin family. As to quaternary structure, forms a Heterooligomeric complex of two stacked eight-membered rings.

In terms of biological role, molecular chaperone; binds unfolded polypeptides in vitro, and has a weak ATPase activity. This chain is Thermosome subunit beta (thsB), found in Thermococcus sp. (strain KS-8).